The sequence spans 465 residues: Cystathionine beta-lyase (465 aa).

At Lys-213 the chain carries N6-(pyridoxal phosphate)lysine.

This sequence belongs to the trans-sulfuration enzymes family. It depends on pyridoxal 5'-phosphate as a cofactor.

It localises to the cytoplasm. The protein localises to the nucleus. The enzyme catalyses L,L-cystathionine + H2O = L-homocysteine + pyruvate + NH4(+). The catalysed reaction is an S-substituted L-cysteine + H2O = a thiol + pyruvate + NH4(+). The protein operates within amino-acid biosynthesis; L-methionine biosynthesis via de novo pathway; L-homocysteine from L-cystathionine: step 1/1. This is Cystathionine beta-lyase (STR3) from Saccharomyces cerevisiae (strain ATCC 204508 / S288c) (Baker's yeast).